The primary structure comprises 512 residues: Bifunctional NAD(P)H-hydrate repair enzyme Nnr (512 aa).

Positions 1–220 (MPIVAYDPDK…GVPPRLVLPQ (220 aa)) are NAD(P)H-hydrate epimerase. One can recognise a YjeF N-terminal domain in the interval 11–218 (VREADRAAVR…PIGVPPRLVL (208 aa)). Residues 58–62 (NNGGD) form an NADPHX 1; for epimerase activity region. K(+)-binding residues include asparagine 59 and aspartate 127. Residues 131-137 (GTGSGGE) form an NADPHX 1; for epimerase activity region. A (6S)-NADPHX-binding site is contributed by aspartate 161. K(+) is bound at residue threonine 164. Positions 228-509 (GYEDLSHMRL…HQAALVLGGL (282 aa)) constitute a YjeF C-terminal domain. The tract at residues 228–512 (GYEDLSHMRL…ALVLGGLGDV (285 aa)) is ADP-dependent (S)-NAD(P)H-hydrate dehydratase. Glycine 335 is a (6S)-NADPHX binding site. The interval 385–391 (HEGEAAC) is NADPHX 2; for dehydratase activity. Residues 421-425 (KGRNS) and 440-449 (HPNLSVPGSG) each bind ADP. Aspartate 450 is a binding site for (6S)-NADPHX.

It in the N-terminal section; belongs to the NnrE/AIBP family. This sequence in the C-terminal section; belongs to the NnrD/CARKD family. K(+) serves as cofactor.

The enzyme catalyses (6S)-NADHX + ADP = AMP + phosphate + NADH + H(+). It carries out the reaction (6S)-NADPHX + ADP = AMP + phosphate + NADPH + H(+). It catalyses the reaction (6R)-NADHX = (6S)-NADHX. The catalysed reaction is (6R)-NADPHX = (6S)-NADPHX. Functionally, bifunctional enzyme that catalyzes the epimerization of the S- and R-forms of NAD(P)HX and the dehydration of the S-form of NAD(P)HX at the expense of ADP, which is converted to AMP. This allows the repair of both epimers of NAD(P)HX, a damaged form of NAD(P)H that is a result of enzymatic or heat-dependent hydration. This is Bifunctional NAD(P)H-hydrate repair enzyme Nnr (nnr) from Thermanaerovibrio acidaminovorans (strain ATCC 49978 / DSM 6589 / Su883) (Selenomonas acidaminovorans).